The primary structure comprises 396 residues: Elongation factor Tu (396 aa).

A tr-type G domain is found at 10–206 (KPHVNVGTIG…ALDTYIPTPE (197 aa)). Residues 19 to 26 (GHVDHGKT) are G1. 19–26 (GHVDHGKT) is a GTP binding site. Residue Thr-26 coordinates Mg(2+). Residues 60–64 (GITIN) are G2. A G3 region spans residues 81-84 (DCPG). Residues 81 to 85 (DCPGH) and 136 to 139 (NKAD) each bind GTP. The segment at 136–139 (NKAD) is G4. The G5 stretch occupies residues 174-176 (SAK).

This sequence belongs to the TRAFAC class translation factor GTPase superfamily. Classic translation factor GTPase family. EF-Tu/EF-1A subfamily. As to quaternary structure, monomer.

It is found in the cytoplasm. The catalysed reaction is GTP + H2O = GDP + phosphate + H(+). Functionally, GTP hydrolase that promotes the GTP-dependent binding of aminoacyl-tRNA to the A-site of ribosomes during protein biosynthesis. The chain is Elongation factor Tu from Bordetella bronchiseptica (strain ATCC BAA-588 / NCTC 13252 / RB50) (Alcaligenes bronchisepticus).